The chain runs to 516 residues: ADP-ribosylation factor GTPase-activating protein 3 (516 aa).

In terms of domain architecture, Arf-GAP spans 10–126 (LTIFKRLRSV…IKSLASQATR (117 aa)). The C4-type zinc finger occupies 25–48 (CFDCGAKNPSWASITYGVFLCIDC). Residues 170-199 (AEPSSLTSRPVETTLENNEGGQEQGPSVEG) form a disordered region. The span at 173-194 (SSLTSRPVETTLENNEGGQEQG) shows a compositional bias: polar residues. Position 231 is a phosphoserine (Ser231). Positions 243-264 (NEIEKQAQAADKMKEQEDLAKA) form a coiled coil. Residues Ser270, Ser274, Ser331, and Ser370 each carry the phosphoserine modification. The interval 392-414 (KTTGYSDRPTARRKPDYEPVENT) is disordered. Phosphoserine is present on residues Ser428, Ser451, Ser453, Ser455, Ser457, and Ser458.

The protein resides in the cytoplasm. The protein localises to the golgi apparatus membrane. GAP activity stimulated by phosphatidylinositol 4,5-bisphosphate (PIP2). Its function is as follows. GTPase-activating protein (GAP) for ADP ribosylation factor 1 (ARF1). Hydrolysis of ARF1-bound GTP may lead to dissociation of coatomer from Golgi-derived membranes to allow fusion with target membranes. This chain is ADP-ribosylation factor GTPase-activating protein 3, found in Macaca fascicularis (Crab-eating macaque).